Consider the following 27-residue polypeptide: Potassium channel toxin kappa-KTx 2.2 (27 aa).

Intrachain disulfides connect Cys3–Cys21 and Cys7–Cys17.

The protein belongs to the short scorpion toxin superfamily. Potassium channel inhibitor kappa-KTx family. Kappa-KTx 2 subfamily. As to expression, expressed by the venom gland.

Its subcellular location is the secreted. Functionally, omTx1 decreases the amplitude of the potassium current of the rat channels Kv1.1/KCNA1 by 17% and Kv1.2/KCNA2 by 12% as well as human Kv1.3/KCNA3 by 24%. In terms of biological role, omTx2 decreases the amplitude of the potassium current of the rat channels Kv1.1/KCNA1 by 8% and Kv1.2/KCNA2 by 10% as well as human Kv1.3/KCNA3 by 36%. Also alters glucose-induced insulin release from pancreatic islets. The sequence is that of Potassium channel toxin kappa-KTx 2.2 from Opisthacanthus madagascariensis (Scorpion).